Here is a 245-residue protein sequence, read N- to C-terminus: 1-(5-phosphoribosyl)-5-[(5-phosphoribosylamino)methylideneamino] imidazole-4-carboxamide isomerase (245 aa).

The active-site Proton acceptor is Asp-7. The Proton donor role is filled by Asp-129.

It belongs to the HisA/HisF family.

The protein localises to the cytoplasm. It carries out the reaction 1-(5-phospho-beta-D-ribosyl)-5-[(5-phospho-beta-D-ribosylamino)methylideneamino]imidazole-4-carboxamide = 5-[(5-phospho-1-deoxy-D-ribulos-1-ylimino)methylamino]-1-(5-phospho-beta-D-ribosyl)imidazole-4-carboxamide. Its pathway is amino-acid biosynthesis; L-histidine biosynthesis; L-histidine from 5-phospho-alpha-D-ribose 1-diphosphate: step 4/9. The polypeptide is 1-(5-phosphoribosyl)-5-[(5-phosphoribosylamino)methylideneamino] imidazole-4-carboxamide isomerase (Shigella boydii serotype 18 (strain CDC 3083-94 / BS512)).